Consider the following 141-residue polypeptide: Hemoglobin subunit alpha-1/2 (141 aa).

One can recognise a Globin domain in the interval 1-141; it reads VLSPADKANV…VGTVLTSKYR (141 aa). A Phosphoserine modification is found at Ser3. Residues Lys7 and Lys11 each carry the N6-succinyllysine modification. Lys16 carries the post-translational modification N6-acetyllysine; alternate. Lys16 carries the N6-succinyllysine; alternate modification. Tyr24 bears the Phosphotyrosine mark. Ser35 bears the Phosphoserine mark. At Lys40 the chain carries N6-succinyllysine. Ser49 bears the Phosphoserine mark. His58 lines the O2 pocket. A heme b-binding site is contributed by His87. At Ser102 the chain carries Phosphoserine. The residue at position 108 (Thr108) is a Phosphothreonine. Ser124 and Ser131 each carry phosphoserine. Residues Thr134 and Thr137 each carry the phosphothreonine modification. Ser138 carries the phosphoserine modification.

This sequence belongs to the globin family. As to quaternary structure, heterotetramer of two alpha chains and two beta chains. In terms of tissue distribution, red blood cells.

In terms of biological role, involved in oxygen transport from the lung to the various peripheral tissues. The sequence is that of Hemoglobin subunit alpha-1/2 from Macroderma gigas (Australian ghost bat).